A 351-amino-acid chain; its full sequence is Heat shock factor protein HSF30 (351 aa).

A DNA-binding region spans residues 29–123 (PPPFLSKTYE…LLKTIKRRRN (95 aa)).

The protein belongs to the HSF family. Homotrimer. Post-translationally, exhibits temperature-dependent phosphorylation.

Its subcellular location is the nucleus. Functionally, DNA-binding protein that specifically binds heat shock promoter elements (HSE) and activates transcription. The protein is Heat shock factor protein HSF30 (HSF30) of Solanum peruvianum (Peruvian tomato).